Here is a 219-residue protein sequence, read N- to C-terminus: Large ribosomal subunit protein uL4 (219 aa).

Residues 43-100 are disordered; sequence AAKRQGTHSTKTRGEVSGGGKKPYRQKGTGRARQGSTRAPQFTGGGTVHGPQPRDYSQ.

Belongs to the universal ribosomal protein uL4 family. As to quaternary structure, part of the 50S ribosomal subunit.

In terms of biological role, one of the primary rRNA binding proteins, this protein initially binds near the 5'-end of the 23S rRNA. It is important during the early stages of 50S assembly. It makes multiple contacts with different domains of the 23S rRNA in the assembled 50S subunit and ribosome. Functionally, forms part of the polypeptide exit tunnel. In Mycobacterium sp. (strain JLS), this protein is Large ribosomal subunit protein uL4.